We begin with the raw amino-acid sequence, 640 residues long: 1-deoxy-D-xylulose-5-phosphate synthase (640 aa).

Residues H79 and 120 to 122 (AHS) contribute to the thiamine diphosphate site. D151 serves as a coordination point for Mg(2+). Residues 152 to 153 (GA), N180, Y289, and E371 each bind thiamine diphosphate. Residue N180 coordinates Mg(2+).

This sequence belongs to the transketolase family. DXPS subfamily. Homodimer. Mg(2+) serves as cofactor. It depends on thiamine diphosphate as a cofactor.

The enzyme catalyses D-glyceraldehyde 3-phosphate + pyruvate + H(+) = 1-deoxy-D-xylulose 5-phosphate + CO2. It participates in metabolic intermediate biosynthesis; 1-deoxy-D-xylulose 5-phosphate biosynthesis; 1-deoxy-D-xylulose 5-phosphate from D-glyceraldehyde 3-phosphate and pyruvate: step 1/1. Catalyzes the acyloin condensation reaction between C atoms 2 and 3 of pyruvate and glyceraldehyde 3-phosphate to yield 1-deoxy-D-xylulose-5-phosphate (DXP). The chain is 1-deoxy-D-xylulose-5-phosphate synthase from Novosphingobium aromaticivorans (strain ATCC 700278 / DSM 12444 / CCUG 56034 / CIP 105152 / NBRC 16084 / F199).